A 207-amino-acid polypeptide reads, in one-letter code: Ribosomal RNA small subunit methyltransferase G (207 aa).

S-adenosyl-L-methionine-binding positions include G76, Q81, 127–128, and R141; that span reads VE.

This sequence belongs to the methyltransferase superfamily. RNA methyltransferase RsmG family.

It localises to the cytoplasm. It carries out the reaction guanosine(527) in 16S rRNA + S-adenosyl-L-methionine = N(7)-methylguanosine(527) in 16S rRNA + S-adenosyl-L-homocysteine. Specifically methylates the N7 position of guanine in position 527 of 16S rRNA. This chain is Ribosomal RNA small subunit methyltransferase G, found in Neisseria meningitidis serogroup A / serotype 4A (strain DSM 15465 / Z2491).